The sequence spans 215 residues: Kinetochore protein Spc25 (215 aa).

Residues 43 to 114 (DNLLTAMEKA…MECIHALKRA (72 aa)) are a coiled coil.

This sequence belongs to the SPC25 family. Component of the Ndc80 complex, which is composed of Ndc80, Nuf2 and Spc25.

Its subcellular location is the nucleus. The protein resides in the chromosome. It localises to the centromere. The protein localises to the kinetochore. Acts as a component of the essential kinetochore-associated Ndc80 complex, which is required for chromosome segregation and spindle checkpoint activity during meiosis and mitosis. Required for kinetochore integrity and the organization of stable microtubule binding sites in the outer plate of the kinetochore. Participates in SAC signaling that responds specifically to disruptions in spindle microtubule dynamics. The NDC80 complex synergistically enhances the affinity of the SKA1 complex for microtubules and may allow the NDC80 complex to track depolymerizing microtubules. This is Kinetochore protein Spc25 from Drosophila ananassae (Fruit fly).